A 303-amino-acid chain; its full sequence is Aspartate carbamoyltransferase catalytic subunit (303 aa).

Arg-51 and Thr-52 together coordinate carbamoyl phosphate. Lys-80 provides a ligand contact to L-aspartate. Positions 101, 129, and 132 each coordinate carbamoyl phosphate. Residues Arg-162 and Arg-221 each contribute to the L-aspartate site. Positions 260 and 261 each coordinate carbamoyl phosphate.

It belongs to the aspartate/ornithine carbamoyltransferase superfamily. ATCase family. As to quaternary structure, heterooligomer of catalytic and regulatory chains.

The enzyme catalyses carbamoyl phosphate + L-aspartate = N-carbamoyl-L-aspartate + phosphate + H(+). It participates in pyrimidine metabolism; UMP biosynthesis via de novo pathway; (S)-dihydroorotate from bicarbonate: step 2/3. In terms of biological role, catalyzes the condensation of carbamoyl phosphate and aspartate to form carbamoyl aspartate and inorganic phosphate, the committed step in the de novo pyrimidine nucleotide biosynthesis pathway. This Saccharolobus islandicus (strain M.16.4 / Kamchatka #3) (Sulfolobus islandicus) protein is Aspartate carbamoyltransferase catalytic subunit.